Here is a 583-residue protein sequence, read N- to C-terminus: Arginine--tRNA ligase (583 aa).

The short motif at 131–141 (ANPTGPMHVGH) is the 'HIGH' region element.

This sequence belongs to the class-I aminoacyl-tRNA synthetase family. Monomer.

Its subcellular location is the cytoplasm. The enzyme catalyses tRNA(Arg) + L-arginine + ATP = L-arginyl-tRNA(Arg) + AMP + diphosphate. The chain is Arginine--tRNA ligase from Parvibaculum lavamentivorans (strain DS-1 / DSM 13023 / NCIMB 13966).